The sequence spans 1146 residues: Elicitor of plant defense protein 1 (1146 aa).

Disordered regions lie at residues 25 to 75 (DPLP…RLSN) and 156 to 226 (ARPP…PRQG). Positions 164–177 (RAERIKAEDSDQSG) are enriched in basic and acidic residues. Residues 246-500 (PLNTDPNMHP…NLCTEAFSPL (255 aa)) form the uDENN domain. Positions 522 to 656 (VNEIPGSRTI…HRRKLHALLQ (135 aa)) constitute a cDENN domain. Residues 658–1016 (AAPAKLRYGV…ERETKPGTTA (359 aa)) enclose the dDENN domain. The tract at residues 730-806 (LHSKVDPNKP…RRSSSFGVDK (77 aa)) is disordered. Residues 732–743 (SKVDPNKPDRPG) are compositionally biased toward basic and acidic residues. A compositionally biased stretch (low complexity) spans 744 to 760 (TSKSTRTSPPSSVSPVS). The span at 769 to 783 (TPVSRSDSGFALTST) shows a compositional bias: polar residues. Residues 784-797 (LREKRSRNFDEKTR) are compositionally biased toward basic and acidic residues. A Phorbol-ester/DAG-type zinc finger spans residues 883-931 (GHCFNWEEGALSSSCSVCDDRAEGDGIYKCSGCSAFAHGRCLGCVSLAC). A disordered region spans residues 1121–1146 (PRPEQRGTRGLVRKQVPSMLGTSPTN).

It belongs to the EPD1 elicitor family. In terms of assembly, interacts with host cotton EIR5A (AC A0A5J5T2N2) and EIR5D (AC A0A5J5NT52) and host N.benthamiana EIR (AC P0DXJ0).

Its subcellular location is the secreted. The protein localises to the host cell. Its function is as follows. Acts as an elicitor that triggers defense responses in both Nicotiana benthamiana and cotton plants. Triggers the accumulation of reactive oxygen species (ROS) and the activation of cell death in cotton plants. Induces significantly enhanced resistance of Nicotiana benthamiana to both the broad-host-range filamentous pathogen Botrytis cinerea and the semibiotrophic pathogen Phytophthora capsici. Stimulates the expression of EIR5A (AC A0A5J5T2N2) and EIR5D (AC A0A5J5NT52) in cotton plants and recognition of EPD1 potentiates EIRs to enhance cotton PAMP-triggered immunity (PTI). This is Elicitor of plant defense protein 1 from Verticillium dahliae (strain VdLs.17 / ATCC MYA-4575 / FGSC 10137) (Verticillium wilt).